Reading from the N-terminus, the 87-residue chain is Small ribosomal subunit protein uS17 (87 aa).

This sequence belongs to the universal ribosomal protein uS17 family. Part of the 30S ribosomal subunit.

Its function is as follows. One of the primary rRNA binding proteins, it binds specifically to the 5'-end of 16S ribosomal RNA. In Alcanivorax borkumensis (strain ATCC 700651 / DSM 11573 / NCIMB 13689 / SK2), this protein is Small ribosomal subunit protein uS17.